Reading from the N-terminus, the 148-residue chain is Lysozyme C (148 aa).

Positions 1-18 are cleaved as a signal peptide; it reads MKAVIILGLVLLSVTVQG. The region spanning 19-148 is the C-type lysozyme domain; sequence KIFERCELAR…VSQYVQGCGV (130 aa). Intrachain disulfides connect cysteine 24–cysteine 146, cysteine 48–cysteine 134, cysteine 83–cysteine 99, and cysteine 95–cysteine 113. Catalysis depends on residues glutamate 53 and aspartate 71.

The protein belongs to the glycosyl hydrolase 22 family. As to quaternary structure, monomer.

The catalysed reaction is Hydrolysis of (1-&gt;4)-beta-linkages between N-acetylmuramic acid and N-acetyl-D-glucosamine residues in a peptidoglycan and between N-acetyl-D-glucosamine residues in chitodextrins.. Functionally, lysozymes have primarily a bacteriolytic function; those in tissues and body fluids are associated with the monocyte-macrophage system and enhance the activity of immunoagents. This chain is Lysozyme C (LYZ), found in Erythrocebus patas (Red guenon).